Consider the following 420-residue polypeptide: Alpha-ketoglutarate-dependent xanthine dioxygenase xan-1 (420 aa).

Fe cation contacts are provided by H157 and D159. Residues T206 and W336 each coordinate 2-oxoglutarate. H351 serves as a coordination point for Fe cation. R366 serves as a coordination point for 2-oxoglutarate. R366 is a binding site for substrate.

The protein belongs to the TfdA dioxygenase family. The cofactor is Fe(2+).

It localises to the cytoplasm. It is found in the cytosol. It carries out the reaction xanthine + 2-oxoglutarate + O2 = urate + succinate + CO2. In terms of biological role, alpha-ketoglutarate-dependent xanthine dioxygenase is a non-heme mononuclear Fe(2+) enzyme that decarboxylates alpha-ketoglutarate to succinate and CO(2) while hydroxylating xanthine to generate uric acid. Allows xanthine utilization as a nitrogen source. The chain is Alpha-ketoglutarate-dependent xanthine dioxygenase xan-1 from Neurospora crassa (strain ATCC 24698 / 74-OR23-1A / CBS 708.71 / DSM 1257 / FGSC 987).